The sequence spans 103 residues: uncharacterized protein (103 aa).

This is an uncharacterized protein from Shigella flexneri.